The chain runs to 271 residues: Probable ribosome biogenesis GTPase A (271 aa).

A CP-type G domain is found at 21-175 (HDQLKKLASS…LSDTPGVFFK (155 aa)). GTP-binding positions include 127-132 (NVGKSS) and Gly-171.

It belongs to the TRAFAC class YlqF/YawG GTPase family. MTG1 subfamily.

The protein resides in the cytoplasm. Functionally, required for a late step of 50S ribosomal subunit assembly. Has GTPase activity. Binds to the 23S rRNA. This is Probable ribosome biogenesis GTPase A (rbgA) from Mycoplasma pneumoniae (strain ATCC 29342 / M129 / Subtype 1) (Mycoplasmoides pneumoniae).